Consider the following 191-residue polypeptide: Superoxide dismutase [Mn/Fe] (191 aa).

Positions 27, 74, 157, and 161 each coordinate Fe(3+). Mn(2+) contacts are provided by histidine 27, histidine 74, aspartate 157, and histidine 161.

It belongs to the iron/manganese superoxide dismutase family. As to quaternary structure, homodimer. Mn(2+) is required as a cofactor. The cofactor is Fe(3+).

It catalyses the reaction 2 superoxide + 2 H(+) = H2O2 + O2. With respect to regulation, inhibited by hydrogen peroxide. Functionally, destroys superoxide anion radicals which are normally produced within the cells and which are toxic to biological systems. Catalyzes the dismutation of superoxide anion radicals into O2 and H2O2 by successive reduction and oxidation of the transition metal ion at the active site. This chain is Superoxide dismutase [Mn/Fe] (sodB), found in Porphyromonas gingivalis (strain ATCC BAA-308 / W83).